A 54-amino-acid polypeptide reads, in one-letter code: MARTDIRPIVKLRSTAGTGYTYTTRKNRRNDPDRLILRKYDPILRRHVDFREER.

The protein belongs to the bacterial ribosomal protein bL33 family.

This Mycobacterium bovis (strain ATCC BAA-935 / AF2122/97) protein is Large ribosomal subunit protein bL33A (rpmG1).